A 286-amino-acid chain; its full sequence is 3-amino-tetrahydro-pyrrolizinone reductase (286 aa).

The active-site Proton acceptor is the Tyr146.

This sequence belongs to the short-chain dehydrogenases/reductases (SDR) family.

It catalyses the reaction 3-amino-5,6,7,7a-tetrahydro-1H-pyrrolizin-1-one + AH2 = 3-amino-tetrahydro-1H-pyrrolizin-1-ol + A. Functionally, involved in the biosynthetic pathway of pyrrolizwilline, a pyrrolizidine alkaloid. Catalyzes the reduction of 3-amino-tetrahydro-pyrrolizinone to 3-amino-tetrahydro-pyrrolizinol. This chain is 3-amino-tetrahydro-pyrrolizinone reductase (xhpD), found in Xenorhabdus hominickii.